A 194-amino-acid polypeptide reads, in one-letter code: Der GTPase-activating protein YihI (194 aa).

The interval 1–87 (MSRQKKSRNI…RDPRLGSRKK (87 aa)) is disordered. The segment covering 37 to 48 (TRYELDAKARED) has biased composition (basic and acidic residues).

It belongs to the YihI family. Interacts with Der.

In terms of biological role, a GTPase-activating protein (GAP) that modifies Der/EngA GTPase function. May play a role in ribosome biogenesis. This is Der GTPase-activating protein YihI from Mannheimia succiniciproducens (strain KCTC 0769BP / MBEL55E).